Consider the following 464-residue polypeptide: UDP-N-acetylmuramate--L-alanine ligase (464 aa).

123-129 (GTHGKTT) serves as a coordination point for ATP.

The protein belongs to the MurCDEF family.

The protein localises to the cytoplasm. It catalyses the reaction UDP-N-acetyl-alpha-D-muramate + L-alanine + ATP = UDP-N-acetyl-alpha-D-muramoyl-L-alanine + ADP + phosphate + H(+). The protein operates within cell wall biogenesis; peptidoglycan biosynthesis. Its function is as follows. Cell wall formation. This Carboxydothermus hydrogenoformans (strain ATCC BAA-161 / DSM 6008 / Z-2901) protein is UDP-N-acetylmuramate--L-alanine ligase.